We begin with the raw amino-acid sequence, 430 residues long: tRNA-2-methylthio-N(6)-dimethylallyladenosine synthase (430 aa).

Residues Met-1–Asn-110 form the MTTase N-terminal domain. The [4Fe-4S] cluster site is built by Cys-10, Cys-46, Cys-75, Cys-146, Cys-150, and Cys-153. A Radical SAM core domain is found at Arg-132–Glu-363. Residues Lys-366–Lys-427 form the TRAM domain.

Belongs to the methylthiotransferase family. MiaB subfamily. Monomer. It depends on [4Fe-4S] cluster as a cofactor.

It localises to the cytoplasm. The enzyme catalyses N(6)-dimethylallyladenosine(37) in tRNA + (sulfur carrier)-SH + AH2 + 2 S-adenosyl-L-methionine = 2-methylsulfanyl-N(6)-dimethylallyladenosine(37) in tRNA + (sulfur carrier)-H + 5'-deoxyadenosine + L-methionine + A + S-adenosyl-L-homocysteine + 2 H(+). Functionally, catalyzes the methylthiolation of N6-(dimethylallyl)adenosine (i(6)A), leading to the formation of 2-methylthio-N6-(dimethylallyl)adenosine (ms(2)i(6)A) at position 37 in tRNAs that read codons beginning with uridine. In Fervidobacterium nodosum (strain ATCC 35602 / DSM 5306 / Rt17-B1), this protein is tRNA-2-methylthio-N(6)-dimethylallyladenosine synthase.